The chain runs to 37 residues: Alpha-conotoxin-like Kn1.2 (37 aa).

The segment covering 1–15 (ESDGAHAKARADKPA) has biased composition (basic and acidic residues). Positions 1–22 (ESDGAHAKARADKPARSATNRQ) are excised as a propeptide. Residues 1-23 (ESDGAHAKARADKPARSATNRQP) are disordered. 2 disulfide bridges follow: C25–C31 and C26–C36. C36 is modified (cysteine amide).

It belongs to the conotoxin A superfamily. In terms of tissue distribution, expressed by the venom duct.

It is found in the secreted. Alpha-conotoxins act on postsynaptic membranes, they bind to the nicotinic acetylcholine receptors (nAChR) and thus inhibit them. This toxin inhibits high voltage-activated (HVA) calcium channel currents in rat DRG neurons (13% inhibition at 1 uM toxin) probably by activating GABA(B) receptors (GABBR1 and/or GABBR2). The protein is Alpha-conotoxin-like Kn1.2 of Conus kinoshitai (Kinoshita's cone).